The sequence spans 199 residues: Thymidine kinase (199 aa).

ATP is bound by residues 15–22 (GSMFSGKS) and 88–91 (DEVQ). The active-site Proton acceptor is E89. 4 residues coordinate Zn(2+): C145, C148, C183, and H186.

The protein belongs to the thymidine kinase family. Homotetramer.

The protein localises to the cytoplasm. The catalysed reaction is thymidine + ATP = dTMP + ADP + H(+). In Staphylococcus saprophyticus subsp. saprophyticus (strain ATCC 15305 / DSM 20229 / NCIMB 8711 / NCTC 7292 / S-41), this protein is Thymidine kinase.